The chain runs to 218 residues: Capsid protein (218 aa).

M1 bears the N-acetylmethionine; by host mark. The interval 1–30 is disordered; that stretch reads MDKSESTSAGRNRRRRPRRGSRSAPSSSDA. Positions 11-21 are enriched in basic residues; the sequence is RNRRRRPRRGS.

The protein belongs to the cucumovirus capsid protein family.

The protein resides in the virion. Its function is as follows. Capsid protein. Probably binds RNA and plays a role in packaging. The sequence is that of Capsid protein from Cucumis sativus (Cucumber).